A 94-amino-acid polypeptide reads, in one-letter code: Small ribosomal subunit protein bS18c (94 aa).

Belongs to the bacterial ribosomal protein bS18 family. As to quaternary structure, part of the 30S ribosomal subunit.

It localises to the plastid. Its subcellular location is the chloroplast. This Manihot esculenta (Cassava) protein is Small ribosomal subunit protein bS18c.